The sequence spans 362 residues: Phosphoserine aminotransferase (362 aa).

Arg-43 provides a ligand contact to L-glutamate. Pyridoxal 5'-phosphate contacts are provided by residues 77–78 (AR), Trp-103, Thr-153, Asp-173, and Gln-196. Residue Lys-197 is modified to N6-(pyridoxal phosphate)lysine.

It belongs to the class-V pyridoxal-phosphate-dependent aminotransferase family. SerC subfamily. As to quaternary structure, homodimer. It depends on pyridoxal 5'-phosphate as a cofactor.

The protein localises to the cytoplasm. The enzyme catalyses O-phospho-L-serine + 2-oxoglutarate = 3-phosphooxypyruvate + L-glutamate. The catalysed reaction is 4-(phosphooxy)-L-threonine + 2-oxoglutarate = (R)-3-hydroxy-2-oxo-4-phosphooxybutanoate + L-glutamate. It participates in amino-acid biosynthesis; L-serine biosynthesis; L-serine from 3-phospho-D-glycerate: step 2/3. The protein operates within cofactor biosynthesis; pyridoxine 5'-phosphate biosynthesis; pyridoxine 5'-phosphate from D-erythrose 4-phosphate: step 3/5. Functionally, catalyzes the reversible conversion of 3-phosphohydroxypyruvate to phosphoserine and of 3-hydroxy-2-oxo-4-phosphonooxybutanoate to phosphohydroxythreonine. The chain is Phosphoserine aminotransferase from Legionella pneumophila (strain Paris).